A 182-amino-acid polypeptide reads, in one-letter code: Superoxide dismutase [Cu-Zn] (182 aa).

Positions 1–19 (MFRTLTVVPLLALGLSLSA) are cleaved as a signal peptide. Cys20 carries the N-palmitoyl cysteine lipid modification. Cys20 carries the S-diacylglycerol cysteine lipid modification. Residues His69, His71, and His95 each contribute to the Cu cation site. An intrachain disulfide couples Cys76 to Cys175. A disordered region spans residues 91–118 (AAGGHFDPGASHNHDGPHARNDQGHGGD). Zn(2+)-binding residues include His95, His104, His115, and Asp118. Basic and acidic residues predominate over residues 102-115 (HNHDGPHARNDQGH).

The protein belongs to the Cu-Zn superoxide dismutase family. Requires Cu cation as cofactor. Zn(2+) serves as cofactor.

The protein resides in the cell membrane. The enzyme catalyses 2 superoxide + 2 H(+) = H2O2 + O2. Destroys radicals which are normally produced within the cells and which are toxic to biological systems. This chain is Superoxide dismutase [Cu-Zn] (sodC), found in Deinococcus radiodurans (strain ATCC 13939 / DSM 20539 / JCM 16871 / CCUG 27074 / LMG 4051 / NBRC 15346 / NCIMB 9279 / VKM B-1422 / R1).